Consider the following 157-residue polypeptide: Protein Smg (157 aa).

This sequence belongs to the Smg family.

The protein is Protein Smg of Escherichia coli O8 (strain IAI1).